We begin with the raw amino-acid sequence, 332 residues long: 4-hydroxy-3-methylbut-2-enyl diphosphate reductase (332 aa).

Cys-13 lines the [4Fe-4S] cluster pocket. (2E)-4-hydroxy-3-methylbut-2-enyl diphosphate is bound by residues His-41 and His-75. Dimethylallyl diphosphate contacts are provided by His-41 and His-75. Isopentenyl diphosphate-binding residues include His-41 and His-75. Cys-97 provides a ligand contact to [4Fe-4S] cluster. His-125 serves as a coordination point for (2E)-4-hydroxy-3-methylbut-2-enyl diphosphate. Residue His-125 participates in dimethylallyl diphosphate binding. Isopentenyl diphosphate is bound at residue His-125. Catalysis depends on Glu-127, which acts as the Proton donor. A (2E)-4-hydroxy-3-methylbut-2-enyl diphosphate-binding site is contributed by Thr-168. A [4Fe-4S] cluster-binding site is contributed by Cys-229. (2E)-4-hydroxy-3-methylbut-2-enyl diphosphate contacts are provided by Ser-257, Ser-258, Asn-259, and Ser-306. Ser-257, Ser-258, Asn-259, and Ser-306 together coordinate dimethylallyl diphosphate. Residues Ser-257, Ser-258, Asn-259, and Ser-306 each contribute to the isopentenyl diphosphate site.

This sequence belongs to the IspH family. The cofactor is [4Fe-4S] cluster.

It carries out the reaction isopentenyl diphosphate + 2 oxidized [2Fe-2S]-[ferredoxin] + H2O = (2E)-4-hydroxy-3-methylbut-2-enyl diphosphate + 2 reduced [2Fe-2S]-[ferredoxin] + 2 H(+). It catalyses the reaction dimethylallyl diphosphate + 2 oxidized [2Fe-2S]-[ferredoxin] + H2O = (2E)-4-hydroxy-3-methylbut-2-enyl diphosphate + 2 reduced [2Fe-2S]-[ferredoxin] + 2 H(+). It participates in isoprenoid biosynthesis; dimethylallyl diphosphate biosynthesis; dimethylallyl diphosphate from (2E)-4-hydroxy-3-methylbutenyl diphosphate: step 1/1. The protein operates within isoprenoid biosynthesis; isopentenyl diphosphate biosynthesis via DXP pathway; isopentenyl diphosphate from 1-deoxy-D-xylulose 5-phosphate: step 6/6. Its function is as follows. Catalyzes the conversion of 1-hydroxy-2-methyl-2-(E)-butenyl 4-diphosphate (HMBPP) into a mixture of isopentenyl diphosphate (IPP) and dimethylallyl diphosphate (DMAPP). Acts in the terminal step of the DOXP/MEP pathway for isoprenoid precursor biosynthesis. The polypeptide is 4-hydroxy-3-methylbut-2-enyl diphosphate reductase (Chlorobaculum parvum (strain DSM 263 / NCIMB 8327) (Chlorobium vibrioforme subsp. thiosulfatophilum)).